Here is a 44-residue protein sequence, read N- to C-terminus: Conotoxin Cl9a (44 aa).

3 positions are modified to 4-carboxyglutamate: E7, E8, and E24. Disulfide bonds link C9-C33, C15-C40, and C23-C42.

As to expression, expressed by the venom duct.

It localises to the secreted. The protein is Conotoxin Cl9a of Californiconus californicus (California cone).